We begin with the raw amino-acid sequence, 133 residues long: Holo-[acyl-carrier-protein] synthase (133 aa).

Positions 8 and 57 each coordinate Mg(2+).

This sequence belongs to the P-Pant transferase superfamily. AcpS family. The cofactor is Mg(2+).

Its subcellular location is the cytoplasm. The enzyme catalyses apo-[ACP] + CoA = holo-[ACP] + adenosine 3',5'-bisphosphate + H(+). Transfers the 4'-phosphopantetheine moiety from coenzyme A to a Ser of acyl-carrier-protein. This chain is Holo-[acyl-carrier-protein] synthase, found in Bartonella quintana (strain Toulouse) (Rochalimaea quintana).